The sequence spans 258 residues: 5'-nucleotidase SurE (258 aa).

Asp-16, Asp-17, Ser-47, and Asn-99 together coordinate a divalent metal cation.

The protein belongs to the SurE nucleotidase family. The cofactor is a divalent metal cation.

Its subcellular location is the cytoplasm. The enzyme catalyses a ribonucleoside 5'-phosphate + H2O = a ribonucleoside + phosphate. Nucleotidase that shows phosphatase activity on nucleoside 5'-monophosphates. In Coxiella burnetii (strain CbuK_Q154) (Coxiella burnetii (strain Q154)), this protein is 5'-nucleotidase SurE.